We begin with the raw amino-acid sequence, 769 residues long: Serine protease HtrA-like (769 aa).

The span at 1 to 20 (MDIGKKHVIPKSQYRRKRRE) shows a compositional bias: basic residues. The disordered stretch occupies residues 1–390 (MDIGKKHVIP…ATSKLNKGRA (390 aa)). 2 stretches are compositionally biased toward basic and acidic residues: residues 21–64 (FFHN…ERFK) and 71–108 (LEQR…DVSK). Over residues 126-137 (YEQNSEATLSTK) the composition is skewed to polar residues. Residues 138–186 (STDKVESTEMRKLSSDKNKVGHEEQHVLSKPSEHDKETRIDSESSRTDS) are compositionally biased toward basic and acidic residues. Positions 247-262 (QQSQNEQTKTYTYGDS) are enriched in polar residues. Basic and acidic residues-rich tracts occupy residues 264 to 296 (QNDK…HIVD) and 310 to 330 (KTDD…HKQN). Polar residues predominate over residues 331 to 347 (ADSSETVGYQSQSTASH). Positions 348–364 (RSTEKRNISINDHDKLN) are enriched in basic and acidic residues. The segment covering 365–390 (GQKTNTKTSANNNQKKATSKLNKGRA) has biased composition (polar residues). A helical membrane pass occupies residues 410–430 (LVILMGIIILIVILNAIFNNV). Active-site charge relay system residues include histidine 504, aspartate 534, and serine 619. The 54-residue stretch at 680 to 733 (IASLNSFERQAVKLPGKVKNGVVVDQVDNNGLADQSGLKKGDVITELDGKLLED) folds into the PDZ domain.

Belongs to the peptidase S1C family.

The protein resides in the cell membrane. This is Serine protease HtrA-like from Staphylococcus aureus (strain COL).